Reading from the N-terminus, the 640-residue chain is (Z)-beta-ocimene synthase TPS13PK, chloroplastic (640 aa).

Residues 1-95 (MAALVSTVSS…PFKDEAYVKR (95 aa)) constitute a chloroplast transit peptide. A disordered region spans residues 50 to 69 (MSTNNNNNNNQKNSSRRSAN). The segment covering 60–69 (QKNSSRRSAN) has biased composition (polar residues). Arginine 334, aspartate 371, aspartate 375, arginine 515, and aspartate 518 together coordinate (2E)-geranyl diphosphate. Aspartate 371 and aspartate 375 together coordinate Mg(2+). Residues 371–375 (DDIYD) carry the DDXXD motif motif. 3 residues coordinate Mg(2+): aspartate 518, threonine 522, and glutamate 526.

This sequence belongs to the terpene synthase family. Monomer. The cofactor is Mg(2+).

Its subcellular location is the plastid. The protein resides in the chloroplast. It catalyses the reaction (2E)-geranyl diphosphate = (Z)-beta-ocimene + diphosphate. Its pathway is secondary metabolite biosynthesis; terpenoid biosynthesis. Involved in monoterpene (C10) olefins biosynthesis, constituants of cannabinoids and terpenoids-rich resins. Catalyzes mainly the conversion of (2E)-geranyl diphosphate to (Z)-beta-ocimene. The sequence is that of (Z)-beta-ocimene synthase TPS13PK, chloroplastic from Cannabis sativa (Hemp).